Here is a 371-residue protein sequence, read N- to C-terminus: Chaperone protein DnaJ (371 aa).

In terms of domain architecture, J spans 5 to 70 (CYYEILNISK…SKRSRYDQFG (66 aa)). The segment at 127 to 204 (GVEKEITIPR…CYGNGKVKKQ (78 aa)) adopts a CR-type zinc-finger fold. Zn(2+) contacts are provided by C140, C143, C156, C159, C178, C181, C192, and C195. CXXCXGXG motif repeat units follow at residues 140 to 147 (CDSCDGTG), 156 to 163 (CHACHGQG), 178 to 185 (CPVCNGTG), and 192 to 199 (CDACYGNG).

This sequence belongs to the DnaJ family. Homodimer. It depends on Zn(2+) as a cofactor.

It localises to the cytoplasm. Functionally, participates actively in the response to hyperosmotic and heat shock by preventing the aggregation of stress-denatured proteins and by disaggregating proteins, also in an autonomous, DnaK-independent fashion. Unfolded proteins bind initially to DnaJ; upon interaction with the DnaJ-bound protein, DnaK hydrolyzes its bound ATP, resulting in the formation of a stable complex. GrpE releases ADP from DnaK; ATP binding to DnaK triggers the release of the substrate protein, thus completing the reaction cycle. Several rounds of ATP-dependent interactions between DnaJ, DnaK and GrpE are required for fully efficient folding. Also involved, together with DnaK and GrpE, in the DNA replication of plasmids through activation of initiation proteins. In Francisella tularensis subsp. holarctica (strain LVS), this protein is Chaperone protein DnaJ.